A 960-amino-acid chain; its full sequence is Endoplasmic reticulum aminopeptidase 2 (960 aa).

Topologically, residues 1–20 (MFHSSAMVNSHRKPMFNIHR) are cytoplasmic. A helical; Signal-anchor for type II membrane protein transmembrane segment spans residues 21–40 (GFYCLTAILPQICICSQFSV). The Lumenal segment spans residues 41-960 (PSSYHFTEDP…TLRTWLMVNT (920 aa)). Residues N85 and N119 are each glycosylated (N-linked (GlcNAc...) asparagine). Residue E200 coordinates substrate. An N-linked (GlcNAc...) asparagine glycan is attached at N219. Residue 334–338 (GAMEN) coordinates substrate. Position 370 (H370) interacts with Zn(2+). The active-site Proton acceptor is the E371. H374 and E393 together coordinate Zn(2+). Residue N405 is glycosylated (N-linked (GlcNAc...) asparagine). A disulfide bridge connects residues C421 and C460. N-linked (GlcNAc...) asparagine glycosylation is present at N650. A disulfide bridge connects residues C759 and C766.

The protein belongs to the peptidase M1 family. Heterodimer with ERAP1. The cofactor is Zn(2+). N-glycosylated. In terms of tissue distribution, ubiquitously expressed. Highly expressed in spleen and leukocytes.

The protein localises to the endoplasmic reticulum membrane. Aminopeptidase that plays a central role in peptide trimming, a step required for the generation of most HLA class I-binding peptides. Peptide trimming is essential to customize longer precursor peptides to fit them to the correct length required for presentation on MHC class I molecules. Preferentially hydrolyzes the basic residues Arg and Lys. This chain is Endoplasmic reticulum aminopeptidase 2 (ERAP2), found in Homo sapiens (Human).